We begin with the raw amino-acid sequence, 102 residues long: NADH-quinone oxidoreductase subunit K 1 (102 aa).

3 helical membrane-spanning segments follow: residues 5–25 (FEHVLILAGILFALGLVCVLV), 30–50 (LIMLLIGIEVMLNAAMLAFVG), and 65–85 (LVIMALTSAEVSLALAMVVYL).

This sequence belongs to the complex I subunit 4L family. NDH-1 is composed of 14 different subunits. Subunits NuoA, H, J, K, L, M, N constitute the membrane sector of the complex.

The protein localises to the cell inner membrane. The enzyme catalyses a quinone + NADH + 5 H(+)(in) = a quinol + NAD(+) + 4 H(+)(out). Functionally, NDH-1 shuttles electrons from NADH, via FMN and iron-sulfur (Fe-S) centers, to quinones in the respiratory chain. The immediate electron acceptor for the enzyme in this species is believed to be ubiquinone. Couples the redox reaction to proton translocation (for every two electrons transferred, four hydrogen ions are translocated across the cytoplasmic membrane), and thus conserves the redox energy in a proton gradient. The protein is NADH-quinone oxidoreductase subunit K 1 of Geobacter metallireducens (strain ATCC 53774 / DSM 7210 / GS-15).